Here is a 196-residue protein sequence, read N- to C-terminus: uncharacterized protein (196 aa).

It is found in the mitochondrion. This is an uncharacterized protein from Paramecium tetraurelia.